Here is a 233-residue protein sequence, read N- to C-terminus: Homeobox protein EMX1 (233 aa).

A DNA-binding region (homeobox) is located at residues 135–194; sequence PKRIRTAFSPSQLLRLERAFEKNHYVVGAERKQLASSLSLSETQVKVWFQNRRTKYKRQK. A disordered region spans residues 192–233; sequence RQKLEEEGPDSDQKKKGSHHINRWRLATKQPNGEDIDVTSND. Residues 193–206 are compositionally biased toward basic and acidic residues; sequence QKLEEEGPDSDQKK.

The protein belongs to the EMX homeobox family.

The protein resides in the nucleus. Its function is as follows. May function in combinations with OTX1/2 to specify cell fates in the developing central nervous system. This chain is Homeobox protein EMX1 (emx1), found in Xenopus tropicalis (Western clawed frog).